Here is a 379-residue protein sequence, read N- to C-terminus: Probable G-protein coupled receptor 27 (379 aa).

Topologically, residues 1 to 26 (MANASEPGGGGSGGGAEAAALGLRLA) are extracellular. Asn3 carries N-linked (GlcNAc...) asparagine glycosylation. Residues 27–47 (TLSLLLCVSLAGNVLFALLIV) form a helical membrane-spanning segment. Residues 48–58 (RERSLHRAPYY) are Cytoplasmic-facing. The chain crosses the membrane as a helical span at residues 59–79 (LLLDLCLADGLRALACLPAVM). At 80–100 (LAARRAAAAAGTPPGALGCKL) the chain is on the extracellular side. A disulfide bridge links Cys98 with Cys175. Residues 101–121 (LAFLAALFCFHAAFLLLGVGV) traverse the membrane as a helical segment. The Cytoplasmic segment spans residues 122 to 142 (TRYLAIAHHRFYAERLAGWPC). A helical membrane pass occupies residues 143 to 163 (AAMLVCAAWALALAAAFPPVL). Topologically, residues 164-185 (DGGGADDEDAPCALEQRPDGAP) are extracellular. A helical membrane pass occupies residues 186–206 (GALGFLLLLAAVVGATHLVYL). Topologically, residues 207–289 (RLLFFIHDRR…FKTEKRLCKM (83 aa)) are cytoplasmic. Residues 290 to 310 (FYAITLLFLLLWGPYVVASYL) traverse the membrane as a helical segment. The Extracellular portion of the chain corresponds to 311 to 324 (RVLVRPGAVPQAYL). Residues 325–345 (TASVWLTFAQAGINPVVCFLF) traverse the membrane as a helical segment. Residues 346-379 (NRELRDCFRAQFPCCQSPQATQATLPCDLKGIGL) lie on the Cytoplasmic side of the membrane.

It belongs to the G-protein coupled receptor 1 family.

The protein localises to the cell membrane. Its function is as follows. Orphan receptor. Possible candidate for amine-like G-protein coupled receptor. The chain is Probable G-protein coupled receptor 27 (Gpr27) from Mus musculus (Mouse).